Consider the following 64-residue polypeptide: Large ribosomal subunit protein bL32 (64 aa).

A disordered region spans residues 1 to 23 (MAVQKSRVTPSRRGQRRSHDALA).

It belongs to the bacterial ribosomal protein bL32 family.

The protein is Large ribosomal subunit protein bL32 of Xylella fastidiosa (strain M23).